The primary structure comprises 544 residues: Chaperonin GroEL (544 aa).

Residues 30-33, Lys-51, 87-91, Gly-415, 478-480, and Asp-494 contribute to the ATP site; these read TLGP, DGTTT, and DVA. The interval 524-544 is disordered; that stretch reads PEKEKKPATPAGAGGMGDMEY. Residues 535 to 544 are compositionally biased toward gly residues; it reads GAGGMGDMEY.

Belongs to the chaperonin (HSP60) family. In terms of assembly, forms a cylinder of 14 subunits composed of two heptameric rings stacked back-to-back. Interacts with the co-chaperonin GroES.

Its subcellular location is the cytoplasm. The enzyme catalyses ATP + H2O + a folded polypeptide = ADP + phosphate + an unfolded polypeptide.. In terms of biological role, together with its co-chaperonin GroES, plays an essential role in assisting protein folding. The GroEL-GroES system forms a nano-cage that allows encapsulation of the non-native substrate proteins and provides a physical environment optimized to promote and accelerate protein folding. The chain is Chaperonin GroEL from Methylacidiphilum infernorum (isolate V4) (Methylokorus infernorum (strain V4)).